Consider the following 423-residue polypeptide: AP-1 complex subunit mu-1 (423 aa).

At Ser-2 the chain carries N-acetylserine. 3 positions are modified to phosphothreonine: Thr-152, Thr-154, and Thr-223. In terms of domain architecture, MHD spans 168–421; sequence KNEVFLDVIE…ITQNGDYQLR (254 aa).

This sequence belongs to the adaptor complexes medium subunit family. In terms of assembly, adaptor protein complex 1 (AP-1) is a heterotetramer composed of two large adaptins (gamma-type subunit AP1G1 and beta-type subunit AP1B1), a medium adaptin (mu-type subunit AP1M1 or AP1M2) and a small adaptin (sigma-type subunit AP1S1 or AP1S2 or AP1S3). Interacts with MARCHF11. In terms of processing, phosphorylation of membrane-bound AP1M1/AP1M2 increases its affinity for sorting signals.

It localises to the golgi apparatus. Its subcellular location is the cytoplasmic vesicle. The protein resides in the clathrin-coated vesicle membrane. Subunit of clathrin-associated adaptor protein complex 1 that plays a role in protein sorting in the trans-Golgi network (TGN) and endosomes. The AP complexes mediate the recruitment of clathrin to membranes and the recognition of sorting signals within the cytosolic tails of transmembrane cargo molecules. The sequence is that of AP-1 complex subunit mu-1 (Ap1m1) from Mus musculus (Mouse).